Here is a 159-residue protein sequence, read N- to C-terminus: Cyclic pyranopterin monophosphate synthase (159 aa).

Residues 75–77 (LCH) and 113–114 (ME) each bind substrate. Aspartate 128 is a catalytic residue.

It belongs to the MoaC family. In terms of assembly, homohexamer; trimer of dimers.

The catalysed reaction is (8S)-3',8-cyclo-7,8-dihydroguanosine 5'-triphosphate = cyclic pyranopterin phosphate + diphosphate. Its pathway is cofactor biosynthesis; molybdopterin biosynthesis. Functionally, catalyzes the conversion of (8S)-3',8-cyclo-7,8-dihydroguanosine 5'-triphosphate to cyclic pyranopterin monophosphate (cPMP). The polypeptide is Cyclic pyranopterin monophosphate synthase (Cereibacter sphaeroides (strain ATCC 17023 / DSM 158 / JCM 6121 / CCUG 31486 / LMG 2827 / NBRC 12203 / NCIMB 8253 / ATH 2.4.1.) (Rhodobacter sphaeroides)).